The following is a 145-amino-acid chain: 3-dehydroquinate dehydratase (145 aa).

Tyr23 serves as the catalytic Proton acceptor. Residues Asn75, His81, and Asp88 each coordinate substrate. Residue His101 is the Proton donor of the active site. Residues 102 to 103 (LS) and Arg112 each bind substrate.

The protein belongs to the type-II 3-dehydroquinase family. Homododecamer.

The catalysed reaction is 3-dehydroquinate = 3-dehydroshikimate + H2O. It functions in the pathway metabolic intermediate biosynthesis; chorismate biosynthesis; chorismate from D-erythrose 4-phosphate and phosphoenolpyruvate: step 3/7. In terms of biological role, catalyzes a trans-dehydration via an enolate intermediate. In Legionella pneumophila (strain Lens), this protein is 3-dehydroquinate dehydratase.